The sequence spans 258 residues: Ribosomal RNA small subunit methyltransferase J (258 aa).

Residues 123-124 (ER) and aspartate 177 contribute to the S-adenosyl-L-methionine site. The interval 232–258 (IDGPKPSHSLEGKSSRYDIYPKKALKA) is disordered. The segment covering 239–252 (HSLEGKSSRYDIYP) has biased composition (basic and acidic residues).

It belongs to the methyltransferase superfamily. RsmJ family.

Its subcellular location is the cytoplasm. The enzyme catalyses guanosine(1516) in 16S rRNA + S-adenosyl-L-methionine = N(2)-methylguanosine(1516) in 16S rRNA + S-adenosyl-L-homocysteine + H(+). Functionally, specifically methylates the guanosine in position 1516 of 16S rRNA. The chain is Ribosomal RNA small subunit methyltransferase J from Pseudomonas putida (strain ATCC 47054 / DSM 6125 / CFBP 8728 / NCIMB 11950 / KT2440).